We begin with the raw amino-acid sequence, 247 residues long: ATP synthase subunit a, chloroplastic (247 aa).

A run of 5 helical transmembrane segments spans residues 38-58, 95-115, 134-154, 199-219, and 220-240; these read QVLI…TIAV, VPFI…GALL, INTT…AGLT, LVVV…VMLL, and GLFT…AYIG.

It belongs to the ATPase A chain family. In terms of assembly, F-type ATPases have 2 components, CF(1) - the catalytic core - and CF(0) - the membrane proton channel. CF(1) has five subunits: alpha(3), beta(3), gamma(1), delta(1), epsilon(1). CF(0) has four main subunits: a, b, b' and c.

It is found in the plastid. It localises to the chloroplast thylakoid membrane. Its function is as follows. Key component of the proton channel; it plays a direct role in the translocation of protons across the membrane. This Nicotiana sylvestris (Wood tobacco) protein is ATP synthase subunit a, chloroplastic.